The following is a 69-amino-acid chain: Putative membrane protein insertion efficiency factor (69 aa).

The protein belongs to the UPF0161 family.

It is found in the cell membrane. Its function is as follows. Could be involved in insertion of integral membrane proteins into the membrane. In Caldanaerobacter subterraneus subsp. tengcongensis (strain DSM 15242 / JCM 11007 / NBRC 100824 / MB4) (Thermoanaerobacter tengcongensis), this protein is Putative membrane protein insertion efficiency factor.